Reading from the N-terminus, the 301-residue chain is MAYVPAPGYQPTYNPTLPYKRPIPGGLSVGMSFYIQGTAKENMRRFHVNFAVGQDDGADVAFHFNPRFDGWDKVVFNTKQSGRWGKEEEKSMPFQKGKHFELVFMVMPEHYKVVVNGSPFYEYGHRLPVQMVTHLQVDGDLELQSINFFGVQPAETKYPAMTGPPVFNPCLPYVGALQGGFTVRRTIIIKGYVLPTAKTFAINFRVGSSEDIALHINPRIGDCLVRNSYMNGSWGTEERMVAYNPFGPGQFFDLSIRCGMDRFKVFANGIHLFNFSHRFQALRKINTLEINGDLTLSYVHI.

2 Galectin domains span residues 19–149 and 173–301; these read YKRP…INFF and YVGA…YVHI.

This chain is Galectin-6 (Lgals6), found in Mus musculus (Mouse).